The chain runs to 511 residues: Phosphoenolpyruvate carboxylase (511 aa).

Belongs to the PEPCase type 2 family. In terms of assembly, homotetramer. Requires Mg(2+) as cofactor.

It carries out the reaction oxaloacetate + phosphate = phosphoenolpyruvate + hydrogencarbonate. Functionally, catalyzes the irreversible beta-carboxylation of phosphoenolpyruvate (PEP) to form oxaloacetate (OAA), a four-carbon dicarboxylic acid source for the tricarboxylic acid cycle. The sequence is that of Phosphoenolpyruvate carboxylase from Saccharolobus islandicus (strain Y.N.15.51 / Yellowstone #2) (Sulfolobus islandicus).